The sequence spans 458 residues: F-box/WD repeat-containing protein 9 (458 aa).

The residue at position 1 (Met1) is an N-acetylmethionine. The segment at 1-28 (MELPPGPRDDPHAWDDDSDPELEPDTDA) is disordered. Residues 16–28 (DDSDPELEPDTDA) show a composition bias toward acidic residues. Phosphoserine occurs at positions 18 and 59. Residues 76–123 (VPGLLSLPPELLLEICAYLDARLVLHVLPRVCHALRDLVRDRVTWRLR) form the F-box domain. WD repeat units follow at residues 171–210 (GHFASIDSVLLLQGGTLCLSGSRDRNVNLWDLQQLGVEPS), 224–261 (THKGWVWSLAALDHRVCSGSWDSTVKLWDMAADGQQFG), 264–301 (KGKAAVLCLSYRPDILVTGTYDKKVTVYDPRVGPALLK), 305–342 (LHSSAVLALLADDRHIISGSEDHTLVVFDRRANSVLQR), 344–381 (QLDSYLLCMSYQEPQLWAGDNQGLLHVFANRSGCFQLV), 387–424 (GHRSQITGIKHSLGALYTTSTDKTIRVHVPTDPPRTIC), and 427–458 (SHHNVLNGICAEGNLVVAASGGLSLEVWRLQA).

As to quaternary structure, interacts with SKP1 and CUL1.

In terms of biological role, substrate-recognition component of the SCF (SKP1-CUL1-F-box protein)-type E3 ubiquitin ligase complex. The protein is F-box/WD repeat-containing protein 9 (FBXW9) of Bos taurus (Bovine).